We begin with the raw amino-acid sequence, 61 residues long: Nakoroxin (61 aa).

4 disulfide bridges follow: Cys3–Cys19, Cys12–Cys37, Cys41–Cys49, and Cys50–Cys55.

This sequence belongs to the three-finger toxin family. Short-chain subfamily. Expressed by the venom gland.

It is found in the secreted. Shows no cytotoxicity and does not inhibit the binding of alpha-bungarotoxin to nicotinic acetylcholine receptors of muscle and alpha-7/CHRNA7 types. However, it potentiates the binding of alpha-bungarotoxin to the acetylcholine-binding protein from Lymnaea stagnalis. In Naja kaouthia (Monocled cobra), this protein is Nakoroxin.